The chain runs to 150 residues: 3-hydroxyacyl-[acyl-carrier-protein] dehydratase FabZ (150 aa).

His-56 is an active-site residue.

The protein belongs to the thioester dehydratase family. FabZ subfamily.

It localises to the cytoplasm. It carries out the reaction a (3R)-hydroxyacyl-[ACP] = a (2E)-enoyl-[ACP] + H2O. Its function is as follows. Involved in unsaturated fatty acids biosynthesis. Catalyzes the dehydration of short chain beta-hydroxyacyl-ACPs and long chain saturated and unsaturated beta-hydroxyacyl-ACPs. In Desulfotalea psychrophila (strain LSv54 / DSM 12343), this protein is 3-hydroxyacyl-[acyl-carrier-protein] dehydratase FabZ.